The sequence spans 124 residues: UPF0225 protein SCO1677 (124 aa).

This sequence belongs to the UPF0225 family.

The polypeptide is UPF0225 protein SCO1677 (Streptomyces coelicolor (strain ATCC BAA-471 / A3(2) / M145)).